A 161-amino-acid chain; its full sequence is NADH:FMN oxidoreductase (161 aa).

FMN-binding positions include Asp30, 37–40, 54–61, Ala88, Arg94, and Phe151; these read AAST and CVQNSSTT.

Belongs to the non-flavoprotein flavin reductase family.

The protein localises to the cytoplasm. It catalyses the reaction FMNH2 + NAD(+) = FMN + NADH + 2 H(+). It carries out the reaction FADH2 + NAD(+) = FAD + NADH + 2 H(+). The protein operates within sulfur metabolism; dibenzothiophene degradation. In terms of biological role, an NADH:FMN oxidoreductase which supplies reduced FMN for the '4S' desulfurization pathway that removes covalently bound sulfur from dibenzothiophene (DBT) without breaking carbon-carbon bonds. Can also use FAD. Provides DszC and probably also DszA (DBT-monooxygenase and DBTO2-monooxygenase respectively) with reduced flavin (FMN and/or FAD). The polypeptide is NADH:FMN oxidoreductase (Mycolicibacterium goodii (Mycobacterium goodii)).